The sequence spans 72 residues: Translation initiation factor IF-1 (72 aa).

Residues 1–72 enclose the S1-like domain; it reads MAKEGNIEME…SKGRIVYRAR (72 aa).

Belongs to the IF-1 family. As to quaternary structure, component of the 30S ribosomal translation pre-initiation complex which assembles on the 30S ribosome in the order IF-2 and IF-3, IF-1 and N-formylmethionyl-tRNA(fMet); mRNA recruitment can occur at any time during PIC assembly.

Its subcellular location is the cytoplasm. In terms of biological role, one of the essential components for the initiation of protein synthesis. Stabilizes the binding of IF-2 and IF-3 on the 30S subunit to which N-formylmethionyl-tRNA(fMet) subsequently binds. Helps modulate mRNA selection, yielding the 30S pre-initiation complex (PIC). Upon addition of the 50S ribosomal subunit IF-1, IF-2 and IF-3 are released leaving the mature 70S translation initiation complex. The protein is Translation initiation factor IF-1 of Hahella chejuensis (strain KCTC 2396).